We begin with the raw amino-acid sequence, 340 residues long: Ferrochelatase (340 aa).

The Fe cation site is built by His189 and Glu292.

The protein belongs to the ferrochelatase family.

The protein resides in the cytoplasm. The enzyme catalyses heme b + 2 H(+) = protoporphyrin IX + Fe(2+). It functions in the pathway porphyrin-containing compound metabolism; protoheme biosynthesis; protoheme from protoporphyrin-IX: step 1/1. Its function is as follows. Catalyzes the ferrous insertion into protoporphyrin IX. The sequence is that of Ferrochelatase from Ectopseudomonas mendocina (strain ymp) (Pseudomonas mendocina).